We begin with the raw amino-acid sequence, 476 residues long: Bifunctional protein HldE (476 aa).

The ribokinase stretch occupies residues Met-1–Ser-318. Asn-195–Glu-198 contacts ATP. Residue Asp-264 is part of the active site. Residues Met-344 to Gly-476 form a cytidylyltransferase region.

The protein in the N-terminal section; belongs to the carbohydrate kinase PfkB family. This sequence in the C-terminal section; belongs to the cytidylyltransferase family. In terms of assembly, homodimer.

It carries out the reaction D-glycero-beta-D-manno-heptose 7-phosphate + ATP = D-glycero-beta-D-manno-heptose 1,7-bisphosphate + ADP + H(+). The enzyme catalyses D-glycero-beta-D-manno-heptose 1-phosphate + ATP + H(+) = ADP-D-glycero-beta-D-manno-heptose + diphosphate. Its pathway is nucleotide-sugar biosynthesis; ADP-L-glycero-beta-D-manno-heptose biosynthesis; ADP-L-glycero-beta-D-manno-heptose from D-glycero-beta-D-manno-heptose 7-phosphate: step 1/4. It participates in nucleotide-sugar biosynthesis; ADP-L-glycero-beta-D-manno-heptose biosynthesis; ADP-L-glycero-beta-D-manno-heptose from D-glycero-beta-D-manno-heptose 7-phosphate: step 3/4. Functionally, catalyzes the phosphorylation of D-glycero-D-manno-heptose 7-phosphate at the C-1 position to selectively form D-glycero-beta-D-manno-heptose-1,7-bisphosphate. Catalyzes the ADP transfer from ATP to D-glycero-beta-D-manno-heptose 1-phosphate, yielding ADP-D-glycero-beta-D-manno-heptose. This chain is Bifunctional protein HldE, found in Aliivibrio salmonicida (strain LFI1238) (Vibrio salmonicida (strain LFI1238)).